Consider the following 665-residue polypeptide: Probable protein transport Sec1a (665 aa).

The disordered stretch occupies residues 543–594 (PSPSFRGIPSASTQTSPAHQPAQSMRSRRTGGTWARPRDSDDGYSSDSVLKH). Composition is skewed to polar residues over residues 552–567 (SASTQTSPAHQPAQSM) and 585–594 (GYSSDSVLKH).

Belongs to the STXBP/unc-18/SEC1 family.

Functionally, involved in the vesicle trafficking. Binds syntaxins. This chain is Probable protein transport Sec1a, found in Oryza sativa subsp. japonica (Rice).